Consider the following 297-residue polypeptide: Protein AKTIP homolog (297 aa).

A disordered region spans residues 13–75; sequence FLSDLDEKSS…QRSPSGSSPE (63 aa). The segment covering 17–42 has biased composition (basic and acidic residues); it reads LDEKSSSSPHDEKKPGDGREVREEKS. Positions 59–75 are enriched in polar residues; that stretch reads MNLSIARQRSPSGSSPE. One can recognise a UBC core domain in the interval 84–232; that stretch reads FLEYTLMAEY…VNECLRRCHN (149 aa).

The protein belongs to the ubiquitin-conjugating enzyme family. FTS subfamily.

In Nematostella vectensis (Starlet sea anemone), this protein is Protein AKTIP homolog.